Here is a 135-residue protein sequence, read N- to C-terminus: Translation initiation factor 2 subunit beta (135 aa).

It belongs to the eIF-2-beta/eIF-5 family. As to quaternary structure, heterotrimer composed of an alpha, a beta and a gamma chain.

Functionally, eIF-2 functions in the early steps of protein synthesis by forming a ternary complex with GTP and initiator tRNA. In Methanothermobacter thermautotrophicus (strain ATCC 29096 / DSM 1053 / JCM 10044 / NBRC 100330 / Delta H) (Methanobacterium thermoautotrophicum), this protein is Translation initiation factor 2 subunit beta (eif2b).